Here is a 360-residue protein sequence, read N- to C-terminus: D-alanine--D-alanine ligase (360 aa).

The ATP-grasp domain maps to 134–343 (KILAQRVGVP…YTELITRLIE (210 aa)). 169–224 (AEKLGRDMFVKPSNQGSSVGVSHVTNADEYAAALKEAFKYDDKVLVEETVPGTEVE) provides a ligand contact to ATP. Mg(2+) contacts are provided by aspartate 297, glutamate 310, and asparagine 312.

This sequence belongs to the D-alanine--D-alanine ligase family. Mg(2+) is required as a cofactor. Mn(2+) serves as cofactor.

The protein resides in the cytoplasm. The enzyme catalyses 2 D-alanine + ATP = D-alanyl-D-alanine + ADP + phosphate + H(+). It functions in the pathway cell wall biogenesis; peptidoglycan biosynthesis. Functionally, cell wall formation. This Lactobacillus helveticus (strain DPC 4571) protein is D-alanine--D-alanine ligase.